Here is an 88-residue protein sequence, read N- to C-terminus: Small ribosomal subunit protein bS20 (88 aa).

Basic residues predominate over residues 1–16 (MANTHSAKKATRKITR). The tract at residues 1–20 (MANTHSAKKATRKITRRTAV) is disordered.

The protein belongs to the bacterial ribosomal protein bS20 family.

Binds directly to 16S ribosomal RNA. The chain is Small ribosomal subunit protein bS20 from Nitrobacter hamburgensis (strain DSM 10229 / NCIMB 13809 / X14).